The chain runs to 247 residues: Type II restriction enzyme SmaI (247 aa).

Requires Mg(2+) as cofactor. K(+) serves as cofactor.

The catalysed reaction is Endonucleolytic cleavage of DNA to give specific double-stranded fragments with terminal 5'-phosphates.. Functionally, a P subtype restriction enzyme that recognizes the double-stranded sequence 5'-CCCGGG-3' and cleaves after C-3. The protein is Type II restriction enzyme SmaI (smaIR) of Serratia marcescens.